Reading from the N-terminus, the 128-residue chain is Flagellar basal body rod protein FlgB (128 aa).

It belongs to the flagella basal body rod proteins family. As to quaternary structure, the basal body constitutes a major portion of the flagellar organelle and consists of a number of rings mounted on a central rod. In Gram-negative bacteria, at least four rings, L, P, S and M are present, whereas Gram-positive bacteria lack the L and P rings. The rod consists of about 26 subunits of FlgG in the distal portion, and FlgB, FlgC and FlgF build up the proximal portion of the rod with about 6 subunits each. Rod assembly occurs by export via the flagellum-specific pathway of its constituent proteins and by their incorporation into the rod structure in the probable order of FlgB, FlgC, FlgF and FlgG. Another protein, FliE, also assembles onto the stable rod structure.

It is found in the bacterial flagellum basal body. Structural component of flagellum, the bacterial motility apparatus. Part of the rod structure of flagellar basal body. In Cereibacter sphaeroides (strain ATCC 17029 / ATH 2.4.9) (Rhodobacter sphaeroides), this protein is Flagellar basal body rod protein FlgB.